Consider the following 150-residue polypeptide: Large ribosomal subunit protein uL15 (150 aa).

Residues 1–58 are disordered; sequence MNLSGIKPPKGQVKTKKRIGRGMGSGHGKTATRGSKGQHAGTGFSQKRGFEGGQMPLH.

It belongs to the universal ribosomal protein uL15 family. As to quaternary structure, part of the 50S ribosomal subunit.

Its function is as follows. Binds to the 23S rRNA. The sequence is that of Large ribosomal subunit protein uL15 from Solibacter usitatus (strain Ellin6076).